The following is a 268-amino-acid chain: Undecaprenyl-diphosphatase (268 aa).

The next 8 helical transmembrane spans lie at V8–L28, A41–L61, F83–K103, V108–W128, F144–V164, A184–F204, I218–L238, and F246–L266.

It belongs to the UppP family.

It is found in the cell inner membrane. The catalysed reaction is di-trans,octa-cis-undecaprenyl diphosphate + H2O = di-trans,octa-cis-undecaprenyl phosphate + phosphate + H(+). In terms of biological role, catalyzes the dephosphorylation of undecaprenyl diphosphate (UPP). Confers resistance to bacitracin. The protein is Undecaprenyl-diphosphatase of Bradyrhizobium diazoefficiens (strain JCM 10833 / BCRC 13528 / IAM 13628 / NBRC 14792 / USDA 110).